Reading from the N-terminus, the 368-residue chain is tRNA-specific 2-thiouridylase MnmA (368 aa).

ATP is bound by residues 12–19 (GMSGGVDS) and Met38. An interaction with target base in tRNA region spans residues 98 to 100 (NPD). The active-site Nucleophile is the Cys103. Cys103 and Cys200 form a disulfide bridge. An ATP-binding site is contributed by Gly128. The tract at residues 150–152 (KDQ) is interaction with tRNA. Catalysis depends on Cys200, which acts as the Cysteine persulfide intermediate. Residues 311–312 (RY) form an interaction with tRNA region.

This sequence belongs to the MnmA/TRMU family.

It localises to the cytoplasm. It catalyses the reaction S-sulfanyl-L-cysteinyl-[protein] + uridine(34) in tRNA + AH2 + ATP = 2-thiouridine(34) in tRNA + L-cysteinyl-[protein] + A + AMP + diphosphate + H(+). Functionally, catalyzes the 2-thiolation of uridine at the wobble position (U34) of tRNA, leading to the formation of s(2)U34. In Aeromonas salmonicida (strain A449), this protein is tRNA-specific 2-thiouridylase MnmA.